The sequence spans 165 residues: MRDVHIDKVVVHMGVGESGEKLVKAENIMKTITKQTPIRSVAKMTQPAFNIRKGAPIGCKVTLRGKPAEDFIKTSLNIVNKTIFESQFDKSGNFSFGIEEHTDFPGMSYDPQIGIFGMDINVVLERNGIRITRRRMQKKKLPEKQRVKKEDAIAFLKKEYSVEVR.

Belongs to the universal ribosomal protein uL5 family. As to quaternary structure, part of the 50S ribosomal subunit; contacts the 5S rRNA and probably tRNA. Forms a bridge to the 30S subunit in the 70S ribosome.

This is one of the proteins that bind and probably mediate the attachment of the 5S RNA into the large ribosomal subunit, where it forms part of the central protuberance. In the 70S ribosome it contacts protein S13 of the 30S subunit (bridge B1b), connecting the 2 subunits; this bridge is implicated in subunit movement. May contact the P site tRNA; the 5S rRNA and some of its associated proteins might help stabilize positioning of ribosome-bound tRNAs. The polypeptide is Large ribosomal subunit protein uL5 (Methanoregula boonei (strain DSM 21154 / JCM 14090 / 6A8)).